The primary structure comprises 90 residues: Small ribosomal subunit protein bS20 (90 aa).

Polar residues predominate over residues 1–10 (MANHKSTQKS). Residues 1-25 (MANHKSTQKSIRQDQKRNLINKSRK) are disordered.

The protein belongs to the bacterial ribosomal protein bS20 family.

Functionally, binds directly to 16S ribosomal RNA. This Orientia tsutsugamushi (strain Ikeda) (Rickettsia tsutsugamushi) protein is Small ribosomal subunit protein bS20.